A 919-amino-acid polypeptide reads, in one-letter code: Phosphoenolpyruvate carboxylase (919 aa).

Catalysis depends on residues His-138 and Lys-579.

It belongs to the PEPCase type 1 family. The cofactor is Mg(2+).

It catalyses the reaction oxaloacetate + phosphate = phosphoenolpyruvate + hydrogencarbonate. In terms of biological role, forms oxaloacetate, a four-carbon dicarboxylic acid source for the tricarboxylic acid cycle. This is Phosphoenolpyruvate carboxylase from Corynebacterium glutamicum (Brevibacterium saccharolyticum).